Here is a 227-residue protein sequence, read N- to C-terminus: UPF0173 metal-dependent hydrolase BCAH820_4729 (227 aa).

Belongs to the UPF0173 family.

This chain is UPF0173 metal-dependent hydrolase BCAH820_4729, found in Bacillus cereus (strain AH820).